The primary structure comprises 508 residues: Ell-associated factor Eaf (508 aa).

Polar residues-rich tracts occupy residues 140 to 150 and 161 to 190; these read GQGQLHSQGAN and GHST…SRRN. Disordered regions lie at residues 140–226 and 251–508; these read GQGQ…WDAN and HNSG…DDDE. A Phosphoserine modification is found at S200. Low complexity predominate over residues 251-268; that stretch reads HNSGHANTSGSSTGSATG. Composition is skewed to polar residues over residues 272–281 and 296–313; these read FGSTSSSSHM and QQMQ…QQPS. The span at 314–341 shows a compositional bias: low complexity; it reads NYGRGYNGGHNHVQQQQQRNSPQQQRPP. Over residues 391–406 the composition is skewed to acidic residues; the sequence is DSSDSDSGSDSDDSTE. Low complexity-rich tracts occupy residues 412–444, 461–477, and 489–502; these read QGQQ…HLNQ, HQHQ…QKQQ, and NDLL…SSNS.

This sequence belongs to the EAF family.

The protein resides in the nucleus. Promotes transcriptional elongation by Su(Tpl)/ELL. Essential for development. This is Ell-associated factor Eaf from Drosophila erecta (Fruit fly).